The chain runs to 87 residues: Defensin alpha-like protein 1 (87 aa).

A signal peptide spans 1 to 19; that stretch reads MKTLILLSALVLLALQVQA. Positions 20 to 56 are excised as a propeptide; sequence DPIQEAEEETKTEEQPADEDQDVSVSFEGPEASAVQD. A compositionally biased stretch (acidic residues) spans 23 to 41; the sequence is QEAEEETKTEEQPADEDQD. The segment at 23 to 43 is disordered; that stretch reads QEAEEETKTEEQPADEDQDVS.

The protein belongs to the alpha-defensin family. In terms of assembly, antiparallel homodimer; disulfide-linked. As to expression, specifically expressed in small intestine (jejunum and ileum). Probably expressed by Paneth cells at the base of intestinal crypts. Coexpressed with MMP7 in small intestine.

It localises to the secreted. Intestinal defense peptide. Has potent antibacterial activity against Gram-negative bacteria E.coli O157:H7, S.typhimurium DT104, and K.pneumoniae; and against Gram-positive bacteria S.aureus, methicillin-resistant S.aureus and L.monocytogenes. Remains active in the presence of NaCl and Mg(2+). Probably functions by disrupting bacterial membrane integrity. However, does not show cytotoxic activity towards human intestinal cells. The polypeptide is Defensin alpha-like protein 1 (Rattus norvegicus (Rat)).